We begin with the raw amino-acid sequence, 572 residues long: Methionine--tRNA ligase (572 aa).

The 'HIGH' region motif lies at 11 to 21 (PYVNHVPHLGT). Cys-143, Cys-146, Cys-156, and Cys-159 together coordinate Zn(2+). The 'KMSKS' region signature appears at 334–338 (QFSKS). Lys-337 contributes to the ATP binding site.

Belongs to the class-I aminoacyl-tRNA synthetase family. MetG type 1 subfamily. Requires Zn(2+) as cofactor.

Its subcellular location is the cytoplasm. It catalyses the reaction tRNA(Met) + L-methionine + ATP = L-methionyl-tRNA(Met) + AMP + diphosphate. Its function is as follows. Is required not only for elongation of protein synthesis but also for the initiation of all mRNA translation through initiator tRNA(fMet) aminoacylation. The chain is Methionine--tRNA ligase (metG) from Aeropyrum pernix (strain ATCC 700893 / DSM 11879 / JCM 9820 / NBRC 100138 / K1).